Here is a 656-residue protein sequence, read N- to C-terminus: Spermatogenesis-associated protein 13 (656 aa).

Residues 1-12 (MHPASVTTTSQD) are compositionally biased toward polar residues. The tract at residues 1-26 (MHPASVTTTSQDPCAPSGSCRGGRRR) is disordered. Position 82 is a phosphoserine (Ser-82). The interval 85–115 (IGLDRVGRRRQMKTSNVSSDGGAESSALVDD) is disordered. The tract at residues 102–154 (SSDGGAESSALVDDNGSEEDFSYEELCQANPRYLQPGGEQLAINELISDGSVV) is ABR (APC-binding region) domain. Residue Ser-118 is modified to Phosphoserine. The SH3 domain occupies 151–210 (GSVVCAEALWDHVTMDDQELGFKAGDVIQVLEASNKDWWWGRNEDKEAWFPASFVRLRVN). The disordered stretch occupies residues 215 to 242 (PENCSSSHGEEQDEDTSKARHKHPESQQ). The DH domain occupies 244–428 (MRTNVIQEIM…KNVACLINER (185 aa)). Residues 459–565 (ELIHSGELTK…WLQAYADERR (107 aa)) enclose the PH domain. The C-terminal tail stretch occupies residues 565–656 (RRVQEDQQMG…TFHKLTPFRK (92 aa)).

In terms of assembly, interacts (via ABR and SH3 domain) with APC. The binding of APC enhances its GEF activity by relieving it from an autoinhibitory conformation, in which the ABR and SH3 domains are associated with the C-terminal tail. Interacts (via C-terminal tail) with PPP1R9B (via C-terminus). Interacts with RAC1. Expression is aberrantly enhanced in most colorectal tumors.

The protein localises to the cytoplasm. The protein resides in the cell projection. It is found in the filopodium. Its subcellular location is the lamellipodium. It localises to the ruffle membrane. The protein localises to the podosome. Both the ABR and the SH3 domains contribute to maintaining the protein in an inhibited conformation by associating with the C-terminal tail. Binding of these domains to the C-terminal tail inhibits the activity of the protein by blocking a region that is required for its GEF activity. Its function is as follows. Acts as a guanine nucleotide exchange factor (GEF) for RHOA, RAC1 and CDC42 GTPases. Regulates cell migration and adhesion assembly and disassembly through a RAC1, PI3K, RHOA and AKT1-dependent mechanism. Increases both RAC1 and CDC42 activity, but decreases the amount of active RHOA. Required for MMP9 up-regulation via the JNK signaling pathway in colorectal tumor cells. Involved in tumor angiogenesis and may play a role in intestinal adenoma formation and tumor progression. In Mus musculus (Mouse), this protein is Spermatogenesis-associated protein 13 (Spata13).